Reading from the N-terminus, the 271-residue chain is Elongation factor Ts (271 aa).

The tract at residues 76–79 (TDFV) is involved in Mg(2+) ion dislocation from EF-Tu.

The protein belongs to the EF-Ts family.

Its subcellular location is the cytoplasm. Associates with the EF-Tu.GDP complex and induces the exchange of GDP to GTP. It remains bound to the aminoacyl-tRNA.EF-Tu.GTP complex up to the GTP hydrolysis stage on the ribosome. This chain is Elongation factor Ts, found in Saccharopolyspora erythraea (strain ATCC 11635 / DSM 40517 / JCM 4748 / NBRC 13426 / NCIMB 8594 / NRRL 2338).